Here is an 89-residue protein sequence, read N- to C-terminus: VIGGAECDINEHPSLALIYSTSMRFHCAGTLLNQEWVSFTMWDKDIMLIRTLCAGVLEGGKDTCLAHPCAQPLLPAFYTKVFDYIPWIK.

Positions 1–89 (VIGGAECDIN…KVFDYIPWIK (89 aa)) constitute a Peptidase S1 domain. Aspartate 45 acts as the Charge relay system in catalysis. Cysteines 64 and 69 form a disulfide.

It belongs to the peptidase S1 family. Snake venom subfamily. In terms of processing, glycosylated. In terms of tissue distribution, expressed by the venom gland.

Its subcellular location is the secreted. Its activity is regulated as follows. Inhibited by PMSF. Not inhibited by benzamidine. Its function is as follows. Snake venom serine protease that cleaves fibrinogen alpha and beta chains (FGA and FGB), but not gamma chains. Exhibits fibrinolytic and kininogenolytic. Preferentially cleaves after Arg and Lys residues. This chain is Snake venom serine protease rhinocerase, found in Bitis rhinoceros (West African gaboon viper).